A 294-amino-acid chain; its full sequence is uncharacterized protein (294 aa).

A disordered region spans residues 1-215 (MTTAITPDKK…DQDDDDQKDL (215 aa)). 2 stretches are compositionally biased toward basic residues: residues 27–43 (TKPRRSSKTSKKRKSKK) and 50–78 (AKKRKTKRSKKSAKRTKRSAPKKAPKKAP). Low complexity predominate over residues 79-88 (MKAPSKPAAK). Positions 92–102 (QQAQASLQKPI) are enriched in polar residues. Over residues 118–136 (PRPPTPIPPTGVKPEPAPR) the composition is skewed to pro residues. Residues 145–160 (SVSSTTPRTSATTGTT) are compositionally biased toward low complexity.

This is an uncharacterized protein from Caenorhabditis elegans.